We begin with the raw amino-acid sequence, 340 residues long: Probable allantoicase (340 aa).

Belongs to the allantoicase family.

The enzyme catalyses allantoate + H2O = (S)-ureidoglycolate + urea. Its pathway is nitrogen metabolism; (S)-allantoin degradation; (S)-ureidoglycolate from allantoate (aminidohydrolase route): step 1/1. The sequence is that of Probable allantoicase from Rhizobium meliloti (strain 1021) (Ensifer meliloti).